Here is a 202-residue protein sequence, read N- to C-terminus: Glycerol-3-phosphate acyltransferase (202 aa).

5 consecutive transmembrane segments (helical) span residues 6–26 (LTLGMILSAYLAGSISSAVLV), 56–76 (SAALVLFFDMLKGALPAYIAF), 82–102 (SVSLGIIAIAACLGHIFPIFF), 118–138 (APIGPELALLLMGSWVLMVLI), and 141–161 (YSSLAAIVTALLAPFYTWYLD).

Belongs to the PlsY family. Probably interacts with PlsX.

Its subcellular location is the cell inner membrane. It carries out the reaction an acyl phosphate + sn-glycerol 3-phosphate = a 1-acyl-sn-glycero-3-phosphate + phosphate. The protein operates within lipid metabolism; phospholipid metabolism. Functionally, catalyzes the transfer of an acyl group from acyl-phosphate (acyl-PO(4)) to glycerol-3-phosphate (G3P) to form lysophosphatidic acid (LPA). This enzyme utilizes acyl-phosphate as fatty acyl donor, but not acyl-CoA or acyl-ACP. The sequence is that of Glycerol-3-phosphate acyltransferase from Shewanella woodyi (strain ATCC 51908 / MS32).